The chain runs to 710 residues: MARKRKPPSSQGDPRRYDPDFQGPTAKRTCTDVLCCLIFLLFILGYVLLGLLAWAHGDPRKMAYPTDSQGHFCGQKGTPNENKTVLFYFNIFRCTSPSMMLRLQCSTTQICVSRCPERFLTYLDMQFLNKEDKNYWEYYRQFCKAKAKPVETLRDLLISGDCPLAVYPSRPFLQRCIPDLSALNGTWTPGSRMKFEDGSGQTRTMLEFREAANGISDLINARTIGLKLLEDYATSWKWILIGLTVAMALSWTFLILLRFTAGFLFWFFIFGVLGIIGYGIWYCFLEYSSIQQRPQSTFWMYGFGIQRRVNMFFHLKETWFSMMIILSAIEIIIIIVLIFLRTRIQVAIILLQEGSKAISYLPSALIYPVLTFILLSICISYWAVTAVFLATSGVPIFKVMVPAGQCIYEDETCDPEIFPYTNIPKDCPGASCNFAFYGGRSMYHNYILTFQVYNLFAFLWLINFVIALGQCALAGAFASYYWAMKKPDDIPPYPLFTAFGRAVRYHTGSLAFGSLILASVQMFKVIVEYLDRRLKKAQNSAAQFLHCCLQCCFWCLEKMVKFLNRNAYIMIALYGKNFCESTRDAFYLLMRNILKVTVTDEVTYFVLLLGKVLVSGIVGVLAFLLFTERLQIIVDGPTTLNYYWVPFLTLVFGSYMIAHGFFSVYSMCVETIFICFLEDLERNEGSPSRPYFVTPALMNILLEQGKIKKQ.

Residues 1 to 21 (MARKRKPPSSQGDPRRYDPDF) form a disordered region. Residues 1 to 32 (MARKRKPPSSQGDPRRYDPDFQGPTAKRTCTD) lie on the Cytoplasmic side of the membrane. The chain crosses the membrane as a helical span at residues 33-53 (VLCCLIFLLFILGYVLLGLLA). Over 54–236 (WAHGDPRKMA…KLLEDYATSW (183 aa)) the chain is Extracellular. N-linked (GlcNAc...) asparagine glycans are attached at residues asparagine 82 and asparagine 184. A helical transmembrane segment spans residues 237-257 (KWILIGLTVAMALSWTFLILL). Residues 258–260 (RFT) lie on the Cytoplasmic side of the membrane. A helical membrane pass occupies residues 261–281 (AGFLFWFFIFGVLGIIGYGIW). Residues 282 to 319 (YCFLEYSSIQQRPQSTFWMYGFGIQRRVNMFFHLKETW) lie on the Extracellular side of the membrane. A helical membrane pass occupies residues 320 to 340 (FSMMIILSAIEIIIIIVLIFL). Residues 341 to 345 (RTRIQ) are Cytoplasmic-facing. The helical transmembrane segment at 346 to 366 (VAIILLQEGSKAISYLPSALI) threads the bilayer. Topologically, residues 367–368 (YP) are extracellular. The chain crosses the membrane as a helical span at residues 369 to 389 (VLTFILLSICISYWAVTAVFL). Over 390-454 (ATSGVPIFKV…NYILTFQVYN (65 aa)) the chain is Cytoplasmic. The helical transmembrane segment at 455–475 (LFAFLWLINFVIALGQCALAG) threads the bilayer. The Extracellular segment spans residues 476 to 509 (AFASYYWAMKKPDDIPPYPLFTAFGRAVRYHTGS). The helical transmembrane segment at 510 to 530 (LAFGSLILASVQMFKVIVEYL) threads the bilayer. At 531 to 604 (DRRLKKAQNS…KVTVTDEVTY (74 aa)) the chain is on the cytoplasmic side. Residues 605–625 (FVLLLGKVLVSGIVGVLAFLL) form a helical membrane-spanning segment. Residues 626-643 (FTERLQIIVDGPTTLNYY) are Extracellular-facing. A helical membrane pass occupies residues 644–664 (WVPFLTLVFGSYMIAHGFFSV). Residues 665-710 (YSMCVETIFICFLEDLERNEGSPSRPYFVTPALMNILLEQGKIKKQ) lie on the Cytoplasmic side of the membrane.

This sequence belongs to the CTL (choline transporter-like) family.

The protein localises to the cell membrane. It carries out the reaction choline(out) + n H(+)(in) = choline(in) + n H(+)(out). In terms of biological role, choline/H+ antiporter. This is Choline transporter-like protein 5 (Slc44a5) from Mus musculus (Mouse).